The sequence spans 362 residues: Atypical chemokine receptor 3 (362 aa).

The Extracellular portion of the chain corresponds to 1–40 (MDLHLFDYAEPGNFSDISWPCNSSDCIVVDTVLCPNMPNK). N-linked (GlcNAc...) asparagine glycosylation is found at asparagine 13, asparagine 22, and asparagine 39. A helical membrane pass occupies residues 41-61 (SVLLYTLSFIYIFIFVIGMIA). Over 62 to 81 (NSVVVWVNIQAKTTGYDTHC) the chain is Cytoplasmic. The helical transmembrane segment at 82–102 (YILNLAIADLWVVVTIPVWVV) threads the bilayer. The Extracellular portion of the chain corresponds to 103–118 (SLVQHNQWPMGELTCK). A disulfide bridge links cysteine 117 with cysteine 196. The chain crosses the membrane as a helical span at residues 119-139 (ITHLIFSINLFGSIFFLTCMS). Topologically, residues 140–162 (VDRYLSITYFASTSSRRKKVVRR) are cytoplasmic. A helical transmembrane segment spans residues 163-183 (AVCVLVWLLAFCVSLPDTYYL). The Extracellular portion of the chain corresponds to 184–213 (KTVTSASNNETYCRSFYPEHSVKEWLISME). The chain crosses the membrane as a helical span at residues 214-234 (LVSVVLGFAIPFCVIAVFYCL). Residues 235-252 (LARAISASSDQEKQSSRK) lie on the Cytoplasmic side of the membrane. Residues 253–273 (IIFSYVVVFLVCWLPYHVVVL) form a helical membrane-spanning segment. The Extracellular portion of the chain corresponds to 274-296 (LDIFSILHYIPFTCQLENFLFTA). The chain crosses the membrane as a helical span at residues 297 to 319 (LHVTQCLSLVHCCVNPVLYSFIN). At 320–362 (RNYRYELMKAFIFKYSAKTGLTKLIDASRVSETEYSALEQNAK) the chain is on the cytoplasmic side. A C-terminal cytoplasmic tail region spans residues 324-362 (YELMKAFIFKYSAKTGLTKLIDASRVSETEYSALEQNAK). Phosphoserine is present on residues serine 347, serine 350, and serine 355.

Belongs to the G-protein coupled receptor 1 family. Atypical chemokine receptor subfamily. As to quaternary structure, homodimer. Can form heterodimers with CXCR4; heterodimerization may regulate CXCR4 signaling activity. Interacts with ARRB1 and ARRB2. In terms of processing, the Ser/Thr residues in the C-terminal cytoplasmic tail may be phosphorylated. Ubiquitinated at the Lys residues in its C-terminal cytoplasmic tail and is essential for correct trafficking from and to the cell membrane. Deubiquitinated by CXCL12-stimulation in a reversible manner.

It localises to the cell membrane. Its subcellular location is the early endosome. The protein resides in the recycling endosome. In terms of biological role, atypical chemokine receptor that controls chemokine levels and localization via high-affinity chemokine binding that is uncoupled from classic ligand-driven signal transduction cascades, resulting instead in chemokine sequestration, degradation, or transcytosis. Also known as interceptor (internalizing receptor) or chemokine-scavenging receptor or chemokine decoy receptor. Acts as a receptor for chemokines CXCL11 and CXCL12/SDF1. Chemokine binding does not activate G-protein-mediated signal transduction but instead induces beta-arrestin recruitment, leading to ligand internalization and activation of MAPK signaling pathway. Required for regulation of CXCR4 protein levels in migrating interneurons, thereby adapting their chemokine responsiveness. In glioma cells, transduces signals via MEK/ERK pathway, mediating resistance to apoptosis. Promotes cell growth and survival. Not involved in cell migration, adhesion or proliferation of normal hematopoietic progenitors but activated by CXCL11 in malignant hemapoietic cells, leading to phosphorylation of ERK1/2 (MAPK3/MAPK1) and enhanced cell adhesion and migration. Plays a regulatory role in CXCR4-mediated activation of cell surface integrins by CXCL12. Required for heart valve development. Regulates axon guidance in the oculomotor system through the regulation of CXCL12 levels. In Canis lupus familiaris (Dog), this protein is Atypical chemokine receptor 3 (ACKR3).